We begin with the raw amino-acid sequence, 240 residues long: Large ribosomal subunit protein uL2 (240 aa).

The segment covering 1–20 (MGKRLQSQNRGKGTPRYTSP) has biased composition (polar residues). 2 disordered regions span residues 1-33 (MGKR…YRKF) and 204-240 (PFGG…TGKR). 2 stretches are compositionally biased toward basic residues: residues 21–30 (THKRKGAVKY) and 224–240 (SPGR…TGKR).

The protein belongs to the universal ribosomal protein uL2 family. As to quaternary structure, part of the 50S ribosomal subunit. Forms a bridge to the 30S subunit in the 70S ribosome.

Functionally, one of the primary rRNA binding proteins. Required for association of the 30S and 50S subunits to form the 70S ribosome, for tRNA binding and peptide bond formation. It has been suggested to have peptidyltransferase activity; this is somewhat controversial. Makes several contacts with the 16S rRNA in the 70S ribosome. This is Large ribosomal subunit protein uL2 from Methanococcus aeolicus (strain ATCC BAA-1280 / DSM 17508 / OCM 812 / Nankai-3).